A 101-amino-acid chain; its full sequence is Large ribosomal subunit protein eL43 (101 aa).

The C4-type zinc finger occupies 40–62 (CPSCRSLVRLKRLAFGIWQCPKC).

This sequence belongs to the eukaryotic ribosomal protein eL43 family. Requires Zn(2+) as cofactor.

This Pyrobaculum islandicum (strain DSM 4184 / JCM 9189 / GEO3) protein is Large ribosomal subunit protein eL43.